The following is a 732-amino-acid chain: uncharacterized protein (732 aa).

A TR mART core domain is found at 163–390 (YYTINELNYL…FGIVAKKKYE (228 aa)). Active-site residues include Arg-285, Ser-309, and Glu-354.

This is an uncharacterized protein from Acanthamoeba polyphaga mimivirus (APMV).